Consider the following 109-residue polypeptide: Fluoride-specific ion channel FluC 1 (109 aa).

The next 3 membrane-spanning stretches (helical) occupy residues 21-41, 52-72, and 84-104; these read LFINNNFIVSIIGSLLFGFFI, IILSGFFSCFTSFSGFIYFLY, and IIFCNLIIIINLLVMYFGFWI.

The protein belongs to the fluoride channel Fluc/FEX (TC 1.A.43) family.

It is found in the cell inner membrane. The catalysed reaction is fluoride(in) = fluoride(out). Fluoride-specific ion channel. Important for reducing fluoride concentration in the cell, thus reducing its toxicity. The polypeptide is Fluoride-specific ion channel FluC 1 (Prochlorococcus marinus (strain MIT 9312)).